The sequence spans 293 residues: 4-hydroxy-tetrahydrodipicolinate synthase (293 aa).

Residue Thr44 participates in pyruvate binding. Tyr132 functions as the Proton donor/acceptor in the catalytic mechanism. Catalysis depends on Lys161, which acts as the Schiff-base intermediate with substrate. Pyruvate is bound at residue Ile203.

The protein belongs to the DapA family. Homotetramer; dimer of dimers.

Its subcellular location is the cytoplasm. It catalyses the reaction L-aspartate 4-semialdehyde + pyruvate = (2S,4S)-4-hydroxy-2,3,4,5-tetrahydrodipicolinate + H2O + H(+). Its pathway is amino-acid biosynthesis; L-lysine biosynthesis via DAP pathway; (S)-tetrahydrodipicolinate from L-aspartate: step 3/4. Catalyzes the condensation of (S)-aspartate-beta-semialdehyde [(S)-ASA] and pyruvate to 4-hydroxy-tetrahydrodipicolinate (HTPA). This chain is 4-hydroxy-tetrahydrodipicolinate synthase, found in Persephonella marina (strain DSM 14350 / EX-H1).